Consider the following 250-residue polypeptide: Aquaporin TIP2-1 (250 aa).

Methionine 1 carries the N-acetylmethionine modification. At methionine 1–alanine 20 the chain is on the cytoplasmic side. Alanine 2 bears the N-acetylalanine; in Aquaporin TIP2-1, N-terminally processed mark. A helical membrane pass occupies residues tyrosine 21–alanine 41. Topologically, residues tyrosine 42–proline 54 are vacuolar. A helical transmembrane segment spans residues glycine 55–alanine 75. Over asparagine 76–valine 98 the chain is Cytoplasmic. Positions asparagine 83 to alanine 85 match the NPA 1 motif. Residues isoleucine 99–leucine 119 traverse the membrane as a helical segment. Over lysine 120–glutamate 141 the chain is Vacuolar. A helical membrane pass occupies residues glycine 142–alanine 162. At aspartate 163–serine 168 the chain is on the cytoplasmic side. A helical transmembrane segment spans residues leucine 169–glycine 189. The Vacuolar segment spans residues proline 190–tryptophan 215. The NPA 2 signature appears at asparagine 197–alanine 199. The chain crosses the membrane as a helical span at residues valine 216–phenylalanine 236. Residues methionine 237–phenylalanine 250 lie on the Cytoplasmic side of the membrane.

It belongs to the MIP/aquaporin (TC 1.A.8) family. TIP (TC 1.A.8.10) subfamily. Interacts with cucumber mosaic virus (CMV) Protein 1a. As to expression, strongly expressed in shoot, rosette, bolt and flowers. Also expressed in roots, flower buds and above ground.

Its subcellular location is the vacuole membrane. Functionally, aquaporin required to facilitate the transport of water from the vacuolar compartment to the cytoplasm. Does not promote glycerol permeability. Its function is impaired by Hg(2+). Transports urea in yeast cells and Xenopus laevis oocytes in a pH-independent manner. Transports methylammonium or ammonium in yeast cells and Xenopus laevis oocytes, preferentially at high medium pH. May participate in vacuolar compartmentation and detoxification of ammonium. In Arabidopsis thaliana (Mouse-ear cress), this protein is Aquaporin TIP2-1 (TIP2-1).